The following is a 409-amino-acid chain: Tryptophan synthase beta chain (409 aa).

An N6-(pyridoxal phosphate)lysine modification is found at Lys-92.

Belongs to the TrpB family. In terms of assembly, tetramer of two alpha and two beta chains. Pyridoxal 5'-phosphate serves as cofactor.

The enzyme catalyses (1S,2R)-1-C-(indol-3-yl)glycerol 3-phosphate + L-serine = D-glyceraldehyde 3-phosphate + L-tryptophan + H2O. Its pathway is amino-acid biosynthesis; L-tryptophan biosynthesis; L-tryptophan from chorismate: step 5/5. In terms of biological role, the beta subunit is responsible for the synthesis of L-tryptophan from indole and L-serine. The protein is Tryptophan synthase beta chain (trpB) of Methanococcus voltae.